The chain runs to 413 residues: Gamma-DL-glutamyl hydrolase (413 aa).

Residues 1 to 32 form the signal peptide; sequence MNTLANWKKFLLVAVIICFLVPIMTKAEIAEA. 3 NlpC/P60 domains span residues 33-159, 163-287, and 291-413; these read DTSS…RRIA, ATAD…RRFD, and IPKE…IRVQ. Catalysis depends on Cys-194, which acts as the Nucleophile. His-247 (proton acceptor) is an active-site residue. Gln-259 is an active-site residue.

This sequence belongs to the peptidase C40 family.

The protein localises to the secreted. It localises to the cell wall. Inhibited by pretreatment with 1 mM 4-(hydroxymercuri)benzoate, a sulfhydryl inhibitor. Cleaves, in an endo-type manner, the gamma-glutamyl bond between D-glutamate and L-glutamate of poly-gamma-glutamate (PGA). This chain is Gamma-DL-glutamyl hydrolase (pgdS), found in Bacillus subtilis (strain 168).